A 449-amino-acid polypeptide reads, in one-letter code: uncharacterized protein (449 aa).

Positions 1-13 are enriched in basic residues; sequence MPKAPKTKLHHAP. The tract at residues 1–125 is disordered; that stretch reads MPKAPKTKLH…SQEEEEYEEL (125 aa). Position 22 is a phosphoserine (serine 22). Polar residues predominate over residues 73–84; it reads KPSQISAFISNG. The residue at position 156 (serine 156) is a Phosphoserine.

The protein belongs to the bystin family.

This is an uncharacterized protein from Schizosaccharomyces pombe (strain 972 / ATCC 24843) (Fission yeast).